The sequence spans 437 residues: Glutamate-1-semialdehyde 2,1-aminomutase (437 aa).

K273 bears the N6-(pyridoxal phosphate)lysine mark.

The protein belongs to the class-III pyridoxal-phosphate-dependent aminotransferase family. HemL subfamily. In terms of assembly, homodimer. Pyridoxal 5'-phosphate serves as cofactor.

The protein localises to the cytoplasm. It carries out the reaction (S)-4-amino-5-oxopentanoate = 5-aminolevulinate. The protein operates within porphyrin-containing compound metabolism; protoporphyrin-IX biosynthesis; 5-aminolevulinate from L-glutamyl-tRNA(Glu): step 2/2. The protein is Glutamate-1-semialdehyde 2,1-aminomutase of Chlamydia felis (strain Fe/C-56) (Chlamydophila felis).